The primary structure comprises 389 residues: Arginine biosynthesis bifunctional protein ArgJ (389 aa).

Substrate is bound by residues Thr-150, Lys-173, Thr-184, Glu-263, Asn-384, and Thr-389. The active-site Nucleophile is Thr-184.

This sequence belongs to the ArgJ family. Heterotetramer of two alpha and two beta chains.

Its subcellular location is the cytoplasm. The enzyme catalyses N(2)-acetyl-L-ornithine + L-glutamate = N-acetyl-L-glutamate + L-ornithine. The catalysed reaction is L-glutamate + acetyl-CoA = N-acetyl-L-glutamate + CoA + H(+). Its pathway is amino-acid biosynthesis; L-arginine biosynthesis; L-ornithine and N-acetyl-L-glutamate from L-glutamate and N(2)-acetyl-L-ornithine (cyclic): step 1/1. It participates in amino-acid biosynthesis; L-arginine biosynthesis; N(2)-acetyl-L-ornithine from L-glutamate: step 1/4. Functionally, catalyzes two activities which are involved in the cyclic version of arginine biosynthesis: the synthesis of N-acetylglutamate from glutamate and acetyl-CoA as the acetyl donor, and of ornithine by transacetylation between N(2)-acetylornithine and glutamate. The chain is Arginine biosynthesis bifunctional protein ArgJ from Deinococcus radiodurans (strain ATCC 13939 / DSM 20539 / JCM 16871 / CCUG 27074 / LMG 4051 / NBRC 15346 / NCIMB 9279 / VKM B-1422 / R1).